The sequence spans 269 residues: NAD kinase (269 aa).

Asp-45 acts as the Proton acceptor in catalysis. Residues 45-46 (DG), 122-123 (NE), Arg-149, Asp-151, and Ala-186 contribute to the NAD(+) site.

The protein belongs to the NAD kinase family. The cofactor is a divalent metal cation.

The protein resides in the cytoplasm. It catalyses the reaction NAD(+) + ATP = ADP + NADP(+) + H(+). Functionally, involved in the regulation of the intracellular balance of NAD and NADP, and is a key enzyme in the biosynthesis of NADP. Catalyzes specifically the phosphorylation on 2'-hydroxyl of the adenosine moiety of NAD to yield NADP. This is NAD kinase from Staphylococcus carnosus (strain TM300).